We begin with the raw amino-acid sequence, 384 residues long: tRNA-specific 2-thiouridylase MnmA (384 aa).

ATP contacts are provided by residues 29 to 36 and L55; that span reads AMSGGVDS. C123 acts as the Nucleophile in catalysis. A disulfide bond links C123 and C220. G147 contributes to the ATP binding site. The tract at residues 169–171 is interaction with tRNA; the sequence is RDQ. Catalysis depends on C220, which acts as the Cysteine persulfide intermediate.

The protein belongs to the MnmA/TRMU family.

It is found in the cytoplasm. The enzyme catalyses S-sulfanyl-L-cysteinyl-[protein] + uridine(34) in tRNA + AH2 + ATP = 2-thiouridine(34) in tRNA + L-cysteinyl-[protein] + A + AMP + diphosphate + H(+). Its function is as follows. Catalyzes the 2-thiolation of uridine at the wobble position (U34) of tRNA, leading to the formation of s(2)U34. The chain is tRNA-specific 2-thiouridylase MnmA from Dinoroseobacter shibae (strain DSM 16493 / NCIMB 14021 / DFL 12).